The primary structure comprises 212 residues: Ribosomal RNA small subunit methyltransferase G (212 aa).

S-adenosyl-L-methionine contacts are provided by residues Gly80, Leu85, 131 to 132 (AE), and Arg146.

It belongs to the methyltransferase superfamily. RNA methyltransferase RsmG family.

The protein resides in the cytoplasm. It catalyses the reaction guanosine(527) in 16S rRNA + S-adenosyl-L-methionine = N(7)-methylguanosine(527) in 16S rRNA + S-adenosyl-L-homocysteine. Specifically methylates the N7 position of guanine in position 527 of 16S rRNA. The chain is Ribosomal RNA small subunit methyltransferase G from Stenotrophomonas maltophilia (strain R551-3).